A 336-amino-acid chain; its full sequence is MLKTILVGATGYTGAELAHYITKHPELELAGLYVSEHSLDAGKPFSSLYGHLLGVVDQTIQPLALSNIKHICDDVDIVVLATAHEVSHDIAAEFLAQGTVVFDLSGAFRVNDPAFYEKYYGFKHNFDKELKSAVYGLAEWASADIAEANLIAVPGCYPTASLSALKPLAQHGLIAAEQKPIINAVSGVSGAGRKASLASAFCEVSHAPYGVFNHRHQPEISTHLGHEVIFTPHLGSFKRGILATINVKLVAGVTPEQVTAAYQEAYQDQPMVRLLPRRTPSIKAVEKTAYYDLAWQQQGQDLIVVSAIDNLLKGAAAQAMQCINIRFGFAMTTSLV.

The active site involves Cys156.

It belongs to the NAGSA dehydrogenase family. Type 1 subfamily.

Its subcellular location is the cytoplasm. It carries out the reaction N-acetyl-L-glutamate 5-semialdehyde + phosphate + NADP(+) = N-acetyl-L-glutamyl 5-phosphate + NADPH + H(+). It participates in amino-acid biosynthesis; L-arginine biosynthesis; N(2)-acetyl-L-ornithine from L-glutamate: step 3/4. In terms of biological role, catalyzes the NADPH-dependent reduction of N-acetyl-5-glutamyl phosphate to yield N-acetyl-L-glutamate 5-semialdehyde. The polypeptide is N-acetyl-gamma-glutamyl-phosphate reductase (Moritella abyssi).